Here is a 203-residue protein sequence, read N- to C-terminus: Octanoyltransferase (203 aa).

The region spanning 30–203 (EDQDNYFFIT…HIIKEGRKLV (174 aa)) is the BPL/LPL catalytic domain. Residues 69-76 (RGGSVTFH), 135-137 (SVG), and 148-150 (GIS) contribute to the substrate site. The active-site Acyl-thioester intermediate is the C166.

Belongs to the LipB family.

The protein resides in the cytoplasm. The enzyme catalyses octanoyl-[ACP] + L-lysyl-[protein] = N(6)-octanoyl-L-lysyl-[protein] + holo-[ACP] + H(+). Its pathway is protein modification; protein lipoylation via endogenous pathway; protein N(6)-(lipoyl)lysine from octanoyl-[acyl-carrier-protein]: step 1/2. Its function is as follows. Catalyzes the transfer of endogenously produced octanoic acid from octanoyl-acyl-carrier-protein onto the lipoyl domains of lipoate-dependent enzymes. Lipoyl-ACP can also act as a substrate although octanoyl-ACP is likely to be the physiological substrate. The sequence is that of Octanoyltransferase from Persephonella marina (strain DSM 14350 / EX-H1).